The primary structure comprises 479 residues: Anaerobic nitric oxide reductase flavorubredoxin (479 aa).

Residues 30–210 form a zinc metallo-hydrolase region; the sequence is LRGSSYNSYL…PFSRLVTPKI (181 aa). 6 residues coordinate Fe cation: His-79, Glu-81, Asp-83, His-147, Asp-166, and His-227. Positions 254–393 constitute a Flavodoxin-like domain; it reads ITIFYDTMSN…LCREHGREIA (140 aa). FMN contacts are provided by residues 260–264 and 342–369; these read TMSNN and AFGS…EMSL. The region spanning 423–474 is the Rubredoxin-like domain; it reads GPRMQCSVCQWIYDPAKGEPMQDVAPGTPWSEVPDNFLCPECSLGKDVFDEL. Fe cation is bound by residues Cys-428, Cys-431, Cys-461, and Cys-464.

The protein in the N-terminal section; belongs to the zinc metallo-hydrolase group 3 family. As to quaternary structure, homotetramer. Requires Fe cation as cofactor. FMN is required as a cofactor.

It is found in the cytoplasm. Its pathway is nitrogen metabolism; nitric oxide reduction. Anaerobic nitric oxide reductase; uses NADH to detoxify nitric oxide (NO), protecting several 4Fe-4S NO-sensitive enzymes. Has at least 2 reductase partners, only one of which (NorW, flavorubredoxin reductase) has been identified. NO probably binds to the di-iron center; electrons enter from the NorW at rubredoxin and are transferred sequentially to the FMN center and the di-iron center. Also able to function as an aerobic oxygen reductase. This is Anaerobic nitric oxide reductase flavorubredoxin from Shigella sonnei (strain Ss046).